The primary structure comprises 139 residues: Oocyte zinc finger protein XlCOF14 (139 aa).

5 C2H2-type zinc fingers span residues 6–28 (FICS…SNVH), 33–55 (FPCT…QKIH), 61–83 (HKCT…HLSH), 89–111 (FSCF…QLSH), and 117–139 (FVCS…CHIH).

Belongs to the krueppel C2H2-type zinc-finger protein family.

It localises to the nucleus. May be involved in transcriptional regulation. The protein is Oocyte zinc finger protein XlCOF14 of Xenopus laevis (African clawed frog).